The primary structure comprises 883 residues: Translation initiation factor IF-2 (883 aa).

Disordered stretches follow at residues 1-96 and 132-259; these read MVDT…RSGM and QRRA…RGRL. The segment covering 57–66 has biased composition (low complexity); the sequence is PAEPAAAAPE. Positions 72–87 are enriched in pro residues; it reads TPAPPAVSPRQQPRPS. Residues 132–188 show a composition bias toward basic and acidic residues; sequence QRRAAQELVDKAEREAAEVRRKAEEERHRHEEETKRKAETEAKKRFGEAEPAKKPAD. Residues 191 to 217 show a composition bias toward low complexity; sequence PASTSTTTTAPRAPVTTTTRPPAVAAE. A tr-type G domain is found at 380–551; the sequence is PRSPVVTVMG…ALQAELLDLK (172 aa). A G1 region spans residues 389-396; it reads GHVDHGKT. GTP is bound at residue 389 to 396; it reads GHVDHGKT. Positions 414–418 are G2; it reads GITQH. A G3 region spans residues 437–440; the sequence is DTPG. Residues 437–441 and 491–494 each bind GTP; these read DTPGH and NKID. Residues 491 to 494 form a G4 region; the sequence is NKID. The tract at residues 527-529 is G5; sequence SAK.

The protein belongs to the TRAFAC class translation factor GTPase superfamily. Classic translation factor GTPase family. IF-2 subfamily.

It localises to the cytoplasm. Its function is as follows. One of the essential components for the initiation of protein synthesis. Protects formylmethionyl-tRNA from spontaneous hydrolysis and promotes its binding to the 30S ribosomal subunits. Also involved in the hydrolysis of GTP during the formation of the 70S ribosomal complex. The protein is Translation initiation factor IF-2 of Rhodopseudomonas palustris (strain BisB5).